Consider the following 133-residue polypeptide: Ribosome-binding factor A (133 aa).

The protein belongs to the RbfA family. Monomer. Binds 30S ribosomal subunits, but not 50S ribosomal subunits or 70S ribosomes.

Its subcellular location is the cytoplasm. Its function is as follows. One of several proteins that assist in the late maturation steps of the functional core of the 30S ribosomal subunit. Associates with free 30S ribosomal subunits (but not with 30S subunits that are part of 70S ribosomes or polysomes). Required for efficient processing of 16S rRNA. May interact with the 5'-terminal helix region of 16S rRNA. This is Ribosome-binding factor A from Synechocystis sp. (strain ATCC 27184 / PCC 6803 / Kazusa).